The primary structure comprises 78 residues: Probable two-component-system connector protein YcgZ (78 aa).

Probably a connector protein for RcsB/C regulation of biofilm formation, providing additional signal input into the two-component signaling pathway. Partially antagonizes the activities of YmgA and AriR, proteins that, via the Rcs phosphorelay, promote the synthesis of colanic acid, an exopolysaccharide and matrix component. The chain is Probable two-component-system connector protein YcgZ (ycgZ) from Escherichia coli (strain K12).